Here is a 105-residue protein sequence, read N- to C-terminus: UPF0235 protein A1G_07140 (105 aa).

It belongs to the UPF0235 family.

The protein is UPF0235 protein A1G_07140 of Rickettsia rickettsii (strain Sheila Smith).